A 424-amino-acid polypeptide reads, in one-letter code: Pachytene checkpoint protein 2 homolog (424 aa).

171-178 is a binding site for ATP; it reads GPPGTGKT.

Belongs to the AAA ATPase family. PCH2 subfamily.

Functionally, plays a key role in chromosome recombination and chromosome structure development during meiosis. Required at early steps in meiotic recombination that leads to non-crossovers pathways. Also needed for efficient completion of homologous synapsis by influencing crossover distribution along the chromosomes affecting both crossovers and non-crossovers pathways. This chain is Pachytene checkpoint protein 2 homolog (trip13), found in Danio rerio (Zebrafish).